The primary structure comprises 241 residues: Methylthioribulose-1-phosphate dehydratase (241 aa).

Substrate is bound at residue Cys102. Zn(2+)-binding residues include His120, His122, and His199.

The protein belongs to the aldolase class II family. MtnB subfamily. It depends on Zn(2+) as a cofactor.

Its subcellular location is the cytoplasm. The enzyme catalyses 5-(methylsulfanyl)-D-ribulose 1-phosphate = 5-methylsulfanyl-2,3-dioxopentyl phosphate + H2O. Its pathway is amino-acid biosynthesis; L-methionine biosynthesis via salvage pathway; L-methionine from S-methyl-5-thio-alpha-D-ribose 1-phosphate: step 2/6. In terms of biological role, catalyzes the dehydration of methylthioribulose-1-phosphate (MTRu-1-P) into 2,3-diketo-5-methylthiopentyl-1-phosphate (DK-MTP-1-P). The protein is Methylthioribulose-1-phosphate dehydratase of Coprinopsis cinerea (strain Okayama-7 / 130 / ATCC MYA-4618 / FGSC 9003) (Inky cap fungus).